Consider the following 222-residue polypeptide: V-type ATP synthase subunit D (222 aa).

Belongs to the V-ATPase D subunit family.

Functionally, produces ATP from ADP in the presence of a proton gradient across the membrane. In Clostridioides difficile (strain 630) (Peptoclostridium difficile), this protein is V-type ATP synthase subunit D.